The chain runs to 93 residues: Large ribosomal subunit protein uL23 (93 aa).

The protein belongs to the universal ribosomal protein uL23 family. As to quaternary structure, part of the 50S ribosomal subunit. Contacts protein L29, and trigger factor when it is bound to the ribosome.

Its function is as follows. One of the early assembly proteins it binds 23S rRNA. One of the proteins that surrounds the polypeptide exit tunnel on the outside of the ribosome. Forms the main docking site for trigger factor binding to the ribosome. The chain is Large ribosomal subunit protein uL23 from Campylobacter jejuni subsp. jejuni serotype O:2 (strain ATCC 700819 / NCTC 11168).